A 391-amino-acid chain; its full sequence is Argininosuccinate synthase (391 aa).

6–14 (AYSGGLDTT) provides a ligand contact to ATP. An L-citrulline-binding site is contributed by tyrosine 84. Glycine 114 is a binding site for ATP. L-aspartate-binding residues include threonine 116, asparagine 120, and aspartate 121. Position 120 (asparagine 120) interacts with L-citrulline. 5 residues coordinate L-citrulline: arginine 124, serine 171, serine 180, glutamate 253, and tyrosine 265.

The protein belongs to the argininosuccinate synthase family. Type 1 subfamily. As to quaternary structure, homotetramer.

The protein resides in the cytoplasm. The enzyme catalyses L-citrulline + L-aspartate + ATP = 2-(N(omega)-L-arginino)succinate + AMP + diphosphate + H(+). The protein operates within amino-acid biosynthesis; L-arginine biosynthesis; L-arginine from L-ornithine and carbamoyl phosphate: step 2/3. This chain is Argininosuccinate synthase, found in Metallosphaera sedula (strain ATCC 51363 / DSM 5348 / JCM 9185 / NBRC 15509 / TH2).